The following is a 55-amino-acid chain: MIEMARYQCMCGWVYDEDKGEPSQNIPPGTKFEDLPDTFRCPQCGLGKNAFRKID.

The region spanning 4 to 54 (MARYQCMCGWVYDEDKGEPSQNIPPGTKFEDLPDTFRCPQCGLGKNAFRKI) is the Rubredoxin-like domain. Residues cysteine 9, cysteine 11, cysteine 41, and cysteine 44 each contribute to the Fe cation site.

Belongs to the rubredoxin family. Fe(3+) is required as a cofactor.

Its function is as follows. Rubredoxin is a small nonheme, iron protein lacking acid-labile sulfide. Its single Fe, chelated to 4 Cys, functions as an electron acceptor and may also stabilize the conformation of the molecule. The polypeptide is Probable Rubredoxin-2 (Methanocaldococcus jannaschii (strain ATCC 43067 / DSM 2661 / JAL-1 / JCM 10045 / NBRC 100440) (Methanococcus jannaschii)).